The sequence spans 247 residues: Segregation and condensation protein A (247 aa).

Belongs to the ScpA family. Component of a cohesin-like complex composed of ScpA, ScpB and the Smc homodimer, in which ScpA and ScpB bind to the head domain of Smc. The presence of the three proteins is required for the association of the complex with DNA.

The protein resides in the cytoplasm. In terms of biological role, participates in chromosomal partition during cell division. May act via the formation of a condensin-like complex containing Smc and ScpB that pull DNA away from mid-cell into both cell halves. This is Segregation and condensation protein A from Lactobacillus johnsonii (strain CNCM I-12250 / La1 / NCC 533).